A 218-amino-acid chain; its full sequence is GTP cyclohydrolase 1 (218 aa).

3 residues coordinate Zn(2+): C109, H112, and C180.

The protein belongs to the GTP cyclohydrolase I family. Toroid-shaped homodecamer, composed of two pentamers of five dimers.

The enzyme catalyses GTP + H2O = 7,8-dihydroneopterin 3'-triphosphate + formate + H(+). It functions in the pathway cofactor biosynthesis; 7,8-dihydroneopterin triphosphate biosynthesis; 7,8-dihydroneopterin triphosphate from GTP: step 1/1. This chain is GTP cyclohydrolase 1, found in Histophilus somni (strain 129Pt) (Haemophilus somnus).